Reading from the N-terminus, the 313-residue chain is tRNA dimethylallyltransferase (313 aa).

An ATP-binding site is contributed by 17–24 (GPTASGKT). Substrate is bound at residue 19–24 (TASGKT). 4 interaction with substrate tRNA regions span residues 42 to 45 (DSAL), 166 to 170 (QRLSR), 247 to 252 (RCVGYR), and 280 to 287 (KRQITWLR).

The protein belongs to the IPP transferase family. Monomer. It depends on Mg(2+) as a cofactor.

The enzyme catalyses adenosine(37) in tRNA + dimethylallyl diphosphate = N(6)-dimethylallyladenosine(37) in tRNA + diphosphate. Its function is as follows. Catalyzes the transfer of a dimethylallyl group onto the adenine at position 37 in tRNAs that read codons beginning with uridine, leading to the formation of N6-(dimethylallyl)adenosine (i(6)A). In Photorhabdus laumondii subsp. laumondii (strain DSM 15139 / CIP 105565 / TT01) (Photorhabdus luminescens subsp. laumondii), this protein is tRNA dimethylallyltransferase.